The chain runs to 155 residues: SsrA-binding protein (155 aa).

A compositionally biased stretch (basic and acidic residues) spans 132-147 (KRESIKRREQDRDIKR). Residues 132–155 (KRESIKRREQDRDIKRQMKQFNGR) form a disordered region.

It belongs to the SmpB family.

The protein resides in the cytoplasm. Functionally, required for rescue of stalled ribosomes mediated by trans-translation. Binds to transfer-messenger RNA (tmRNA), required for stable association of tmRNA with ribosomes. tmRNA and SmpB together mimic tRNA shape, replacing the anticodon stem-loop with SmpB. tmRNA is encoded by the ssrA gene; the 2 termini fold to resemble tRNA(Ala) and it encodes a 'tag peptide', a short internal open reading frame. During trans-translation Ala-aminoacylated tmRNA acts like a tRNA, entering the A-site of stalled ribosomes, displacing the stalled mRNA. The ribosome then switches to translate the ORF on the tmRNA; the nascent peptide is terminated with the 'tag peptide' encoded by the tmRNA and targeted for degradation. The ribosome is freed to recommence translation, which seems to be the essential function of trans-translation. The chain is SsrA-binding protein from Streptococcus mutans serotype c (strain ATCC 700610 / UA159).